Consider the following 504-residue polypeptide: Tyrosine-protein phosphatase non-receptor type substrate 1 (504 aa).

Residues Met-1–Gly-30 form the signal peptide. Over Glu-31–Tyr-373 the chain is Extracellular. Positions Glu-32–Gly-137 constitute an Ig-like V-type domain. Disulfide bonds link Cys-55/Cys-121 and Cys-170/Cys-228. Ig-like C1-type domains follow at residues Pro-148–Ser-247 and Pro-254–Lys-348. 4 N-linked (GlcNAc...) asparagine glycosylation sites follow: Asn-245, Asn-270, Asn-292, and Asn-319. Residues Cys-273 and Cys-331 are joined by a disulfide bond. The segment covering Asp-336–Glu-355 has biased composition (basic and acidic residues). Positions Asp-336–Asn-364 are disordered. The helical transmembrane segment at Ile-374–Val-394 threads the bilayer. The Cytoplasmic portion of the chain corresponds to Arg-395–Lys-504. The interval Gln-402 to Lys-504 is disordered. Residues Arg-409–Thr-421 are compositionally biased toward basic and acidic residues. Tyr-429 carries the post-translational modification Phosphotyrosine; by Tyr-kinases. Positions Tyr-429–Leu-432 match the SH2-binding motif. The SH3-binding motif lies at Lys-439–Ala-444. The segment covering Glu-446 to Thr-467 has biased composition (polar residues). Tyr-453 and Tyr-470 each carry phosphotyrosine; by Tyr-kinases. 3 short sequence motifs (SH2-binding) span residues Tyr-453–Ile-456, Tyr-470–Leu-473, and Tyr-496–Val-499. Tyr-496 is subject to Phosphotyrosine.

In terms of assembly, binds PTPN11 when tyrosine-phosphorylated, except in macrophages, where it primarily binds PTPN6. Binds GRB2 in vitro. Binds FGR. Binds JAK2 irrespective of its phosphorylation status and forms a stable complex. Binds SCAP1 and/or SCAP2. The resulting complex recruits FYB1. Binds PTK2B. Interacts with TRIM2. In terms of processing, N-glycosylated. Phosphorylated on tyrosine residues in response to stimulation with EGF, growth hormone, insulin and PDGF. Dephosphorylated by PTPN11. As to expression, ubiquitous. Highly expressed in brain. Detected on myeloid cells, but not T-cells. Detected at lower levels in heart, placenta, lung, testis, ovary, colon, liver, small intestine, prostate, spleen, kidney, skeletal muscle and pancreas.

It is found in the membrane. Immunoglobulin-like cell surface receptor for CD47. Acts as docking protein and induces translocation of PTPN6, PTPN11 and other binding partners from the cytosol to the plasma membrane. Supports adhesion of cerebellar neurons, neurite outgrowth and glial cell attachment. May play a key role in intracellular signaling during synaptogenesis and in synaptic function. Involved in the negative regulation of receptor tyrosine kinase-coupled cellular responses induced by cell adhesion, growth factors or insulin. Mediates negative regulation of phagocytosis, mast cell activation and dendritic cell activation. CD47 binding prevents maturation of immature dendritic cells and inhibits cytokine production by mature dendritic cells. Plays a role in antiviral immunity and limits new world arenavirus infection by decreasing virus internalization. Receptor for THBS1. Interaction with THBS1 stimulates phosphorylation of SIRPA. In response to THBS1, involved in ROS signaling in non-phagocytic cells, stimulating NADPH oxidase-derived ROS production. In Homo sapiens (Human), this protein is Tyrosine-protein phosphatase non-receptor type substrate 1 (SIRPA).